The following is a 218-amino-acid chain: Ras-related protein Rab-11B (218 aa).

Gly-2 is subject to N-acetylglycine. A Citrulline modification is found at Arg-4. Ser-20, Gly-21, Gly-23, Lys-24, Ser-25, Asn-26, Asn-37, Leu-38, Ser-40, Ser-42, and Thr-43 together coordinate GTP. Residue Ser-25 coordinates Mg(2+). The Switch 1 motif lies at 36–47 (FNLESKSTIGVE). Mg(2+) is bound by residues Thr-43 and Asp-66. The short motif at 67 to 86 (TAGQERYRAITSAYYRGAVG) is the Switch 2 element. GTP-binding residues include Gly-69, Asn-124, Lys-125, Asp-127, Ala-155, and Leu-156. Positions 184–218 (RAAHDESPGNNVVDISVPPTTDGQKPNKLQCCQNL) are disordered. 2 S-geranylgeranyl cysteine lipidation sites follow: Cys-214 and Cys-215. A Cysteine methyl ester modification is found at Cys-215. The propeptide at 216-218 (QNL) is removed in mature form.

The protein belongs to the small GTPase superfamily. Rab family. Interacts with KCNMA1. Interacts with RAB11FIP1, RAB11FIP2, RAB11FIP3 and RAB11FIP4. May interact with TBC1D14. Interacts with ATP6V1E1. Interacts with PI4KB. Interacts (GDP-bound form) with ZFYVE27. Interacts (GDP-bound form) with KIF5A in a ZFYVE27-dependent manner. Interacts with RELCH. Interacts (in GTP-bound form) with TBC1D8B (via domain Rab-GAP TBC). Forms a complex containing RAB11B, ASAP1, Rabin8/RAB3IP, RAP11FIP3 and ARF4. Interacts with WDR44. The cofactor is Mg(2+). In terms of processing, citrullinated by PADI4. (Microbial infection) Glycosylated on arginine residues by S.typhimurium protein Ssek3.

Its subcellular location is the recycling endosome membrane. The protein resides in the cytoplasmic vesicle. It localises to the secretory vesicle. The protein localises to the synaptic vesicle membrane. It is found in the phagosome membrane. The enzyme catalyses GTP + H2O = GDP + phosphate + H(+). Regulated by guanine nucleotide exchange factors (GEFs) which promote the exchange of bound GDP for free GTP. Regulated by GTPase activating proteins (GAPs) which increase the GTP hydrolysis activity. Inhibited by GDP dissociation inhibitors (GDIs) which prevent Rab-GDP dissociation. Its function is as follows. The small GTPases Rab are key regulators of intracellular membrane trafficking, from the formation of transport vesicles to their fusion with membranes. Rabs cycle between an inactive GDP-bound form and an active GTP-bound form that is able to recruit to membranes different set of downstream effectors directly responsible for vesicle formation, movement, tethering and fusion. The small Rab GTPase RAB11B plays a role in endocytic recycling, regulating apical recycling of several transmembrane proteins including cystic fibrosis transmembrane conductance regulator/CFTR, epithelial sodium channel/ENaC, potassium voltage-gated channel, and voltage-dependent L-type calcium channel. May also regulate constitutive and regulated secretion, like insulin granule exocytosis. Required for melanosome transport and release from melanocytes. Also regulates V-ATPase intracellular transport in response to extracellular acidosis. Promotes Rabin8/RAB3IP preciliary vesicular trafficking to mother centriole by forming a ciliary targeting complex containing Rab11, ASAP1, Rabin8/RAB3IP, RAB11FIP3 and ARF4, thereby regulating ciliogenesis initiation. On the contrary, upon LPAR1 receptor signaling pathway activation, interaction with phosphorylated WDR44 prevents Rab11-RAB3IP-RAB11FIP3 complex formation and cilia growth. The protein is Ras-related protein Rab-11B of Homo sapiens (Human).